A 419-amino-acid polypeptide reads, in one-letter code: CCA-adding enzyme (419 aa).

ATP-binding residues include glycine 8 and arginine 11. 2 residues coordinate CTP: glycine 8 and arginine 11. 2 residues coordinate Mg(2+): aspartate 21 and aspartate 23. Arginine 91, arginine 137, and arginine 140 together coordinate ATP. 3 residues coordinate CTP: arginine 91, arginine 137, and arginine 140.

This sequence belongs to the tRNA nucleotidyltransferase/poly(A) polymerase family. Bacterial CCA-adding enzyme type 2 subfamily. Mg(2+) serves as cofactor.

The catalysed reaction is a tRNA precursor + 2 CTP + ATP = a tRNA with a 3' CCA end + 3 diphosphate. It catalyses the reaction a tRNA with a 3' CCA end + 2 CTP + ATP = a tRNA with a 3' CCACCA end + 3 diphosphate. Catalyzes the addition and repair of the essential 3'-terminal CCA sequence in tRNAs without using a nucleic acid template. Adds these three nucleotides in the order of C, C, and A to the tRNA nucleotide-73, using CTP and ATP as substrates and producing inorganic pyrophosphate. tRNA 3'-terminal CCA addition is required both for tRNA processing and repair. Also involved in tRNA surveillance by mediating tandem CCA addition to generate a CCACCA at the 3' terminus of unstable tRNAs. While stable tRNAs receive only 3'-terminal CCA, unstable tRNAs are marked with CCACCA and rapidly degraded. This Buchnera aphidicola subsp. Baizongia pistaciae (strain Bp) protein is CCA-adding enzyme.